The sequence spans 132 residues: Fatty acid-binding protein 9 (132 aa).

A phosphoserine mark is found at S13, S14, S40, S42, S44, and S91.

Belongs to the calycin superfamily. Fatty-acid binding protein (FABP) family. Testis.

It is found in the cytoplasm. The polypeptide is Fatty acid-binding protein 9 (Fabp9) (Mus musculus (Mouse)).